A 425-amino-acid polypeptide reads, in one-letter code: UDP-N-acetylglucosamine 1-carboxyvinyltransferase (425 aa).

A phosphoenolpyruvate-binding site is contributed by 22–23 (KN). Position 91 (Arg91) interacts with UDP-N-acetyl-alpha-D-glucosamine. The active-site Proton donor is Cys115. Residue Cys115 is modified to 2-(S-cysteinyl)pyruvic acid O-phosphothioketal. UDP-N-acetyl-alpha-D-glucosamine-binding positions include 120–124 (RPIDL), Asp305, and Val327.

It belongs to the EPSP synthase family. MurA subfamily.

The protein resides in the cytoplasm. The catalysed reaction is phosphoenolpyruvate + UDP-N-acetyl-alpha-D-glucosamine = UDP-N-acetyl-3-O-(1-carboxyvinyl)-alpha-D-glucosamine + phosphate. The protein operates within cell wall biogenesis; peptidoglycan biosynthesis. Functionally, cell wall formation. Adds enolpyruvyl to UDP-N-acetylglucosamine. In Coprothermobacter proteolyticus (strain ATCC 35245 / DSM 5265 / OCM 4 / BT), this protein is UDP-N-acetylglucosamine 1-carboxyvinyltransferase.